The following is a 96-amino-acid chain: ATP-dependent Clp protease adapter protein ClpS (96 aa).

It belongs to the ClpS family. In terms of assembly, binds to the N-terminal domain of the chaperone ClpA.

Functionally, involved in the modulation of the specificity of the ClpAP-mediated ATP-dependent protein degradation. This is ATP-dependent Clp protease adapter protein ClpS from Streptomyces coelicolor (strain ATCC BAA-471 / A3(2) / M145).